Consider the following 192-residue polypeptide: UPF0312 protein PputGB1_5030 (192 aa).

Residues 1 to 23 (MLKKTFAALALGTALLSAGQAMA) form the signal peptide.

It belongs to the UPF0312 family. Type 1 subfamily.

The protein resides in the periplasm. The sequence is that of UPF0312 protein PputGB1_5030 from Pseudomonas putida (strain GB-1).